A 116-amino-acid polypeptide reads, in one-letter code: Large ribosomal subunit protein bL20 (116 aa).

It belongs to the bacterial ribosomal protein bL20 family.

In terms of biological role, binds directly to 23S ribosomal RNA and is necessary for the in vitro assembly process of the 50S ribosomal subunit. It is not involved in the protein synthesizing functions of that subunit. This Desulfatibacillum aliphaticivorans protein is Large ribosomal subunit protein bL20.